We begin with the raw amino-acid sequence, 206 residues long: Sclerostin domain-containing protein 1 (206 aa).

Residues 1–22 (MLLSAIHFYGLLLACTFTRSYS) form the signal peptide. A disordered region spans residues 40 to 68 (APASPSSNSTLNQARNGGRHYAGTGSDRN). Over residues 43–54 (SPSSNSTLNQAR) the composition is skewed to polar residues. N-linked (GlcNAc...) asparagine glycosylation is present at Asn-47. 4 cysteine pairs are disulfide-bonded: Cys-75-Cys-133, Cys-89-Cys-147, Cys-100-Cys-163, and Cys-104-Cys-165. The CTCK domain maps to 75–170 (CRELRSTKYI…TACKCKRYTR (96 aa)). N-linked (GlcNAc...) asparagine glycosylation occurs at Asn-173. The disordered stretch occupies residues 176 to 206 (SHNFEGTSQAKPVQHHKERKRASKSSKHSTS). Basic residues predominate over residues 188 to 206 (VQHHKERKRASKSSKHSTS).

The protein belongs to the sclerostin family. As to quaternary structure, interacts with LRP6.

The protein localises to the secreted. Its function is as follows. Can activate or inhibit Wnt signaling in a context-dependent manner. Activates the canonical Wnt pathway whereby acts through Disheveled proteins and beta-catenin. Antagonises Wnt signaling through the canonical pathways presumably by blocking accessibility of certain WNTs to their receptors. Induces posterior neural markers via components of the canonical Wnt pathway. This Gallus gallus (Chicken) protein is Sclerostin domain-containing protein 1 (SOSTDC1).